The chain runs to 344 residues: MSNAITMGIFWHLIGAASAACFYAPFKKVKKWSWETMWSVGGIVSWIILPWAISALLLPNFWAYYSSFSLSTLLPVFLFGAMWGIGNINYGLTMRYLGMSMGIGIAIGITLIVGTLMTPIINGNFDVLINTEGGRMTLLGVLVALIGVGIVTRAGQLKERKMGIKAEEFNLKKGLVLAVMCGIFSAGMSFAMNAAKPMHEAAAALGVDPLYVALPSYVVIMGGGAIINLGFCFIRLAKVKDLSLKADFSLAKPLIFHNVLLSALGGLMWYLQFFFYAWGHARIPAQYDYISWMLHMSFYVLCGGIVGLVLKEWNNAGRRPVTVLSLGCVVIIVAANIVGMGMAN.

Helical transmembrane passes span 4–24 (AITMGIFWHLIGAASAACFYA), 38–58 (WSVGGIVSWIILPWAISALLL), 68–88 (FSLSTLLPVFLFGAMWGIGNI), 101–121 (MGIGIAIGITLIVGTLMTPII), 137–157 (TLLGVLVALIGVGIVTRAGQL), 175–195 (LVLAVMCGIFSAGMSFAMNAA), 214–234 (LPSYVVIMGGGAIINLGFCFI), 259–279 (VLLSALGGLMWYLQFFFYAWG), 290–310 (ISWMLHMSFYVLCGGIVGLVL), and 323–343 (VLSLGCVVIIVAANIVGMGMA).

This sequence belongs to the L-rhamnose transporter (TC 2.A.7.6) family.

It is found in the cell inner membrane. The catalysed reaction is L-rhamnopyranose(in) + H(+)(in) = L-rhamnopyranose(out) + H(+)(out). In terms of biological role, uptake of L-rhamnose across the cytoplasmic membrane with the concomitant transport of protons into the cell (symport system). This is L-rhamnose-proton symporter from Escherichia coli O17:K52:H18 (strain UMN026 / ExPEC).